A 222-amino-acid polypeptide reads, in one-letter code: LexA repressor (222 aa).

The H-T-H motif DNA-binding region spans 28 to 48 (IREIGEHMDIRSTNGVNDHLK). Residues S135 and K172 each act as for autocatalytic cleavage activity in the active site.

This sequence belongs to the peptidase S24 family. As to quaternary structure, homodimer.

The enzyme catalyses Hydrolysis of Ala-|-Gly bond in repressor LexA.. Functionally, represses a number of genes involved in the response to DNA damage (SOS response), including recA and lexA. In the presence of single-stranded DNA, RecA interacts with LexA causing an autocatalytic cleavage which disrupts the DNA-binding part of LexA, leading to derepression of the SOS regulon and eventually DNA repair. In Myxococcus xanthus (strain DK1622), this protein is LexA repressor.